A 253-amino-acid polypeptide reads, in one-letter code: Pre-mRNA-splicing factor SPF27 homolog (253 aa).

Positions 124-235 form a coiled coil; sequence KQYLQKNQRS…IDSFKKEAAE (112 aa).

Belongs to the SPF27 family. In terms of assembly, component of the multiprotein assembly MOS4-associated complex (MAC) at least composed of MOS4, CDC5 and PRL1. Interacts with CYCL1-1 and CDC5. Associated with the spliceosome. Interacts with ENY2.

The protein localises to the nucleus. Component of the MAC complex that probably regulates defense responses through transcriptional control and thereby is essential for plant innate immunity. Involved in mRNA splicing. In Arabidopsis thaliana (Mouse-ear cress), this protein is Pre-mRNA-splicing factor SPF27 homolog (MOS4).